Reading from the N-terminus, the 316-residue chain is Ribose-phosphate pyrophosphokinase (316 aa).

ATP contacts are provided by residues 39–41 (DGE) and 98–99 (RQ). Mg(2+) contacts are provided by H133 and D172. Residue K195 is part of the active site. D-ribose 5-phosphate is bound by residues R197, D221, and 225–229 (DTGGT).

The protein belongs to the ribose-phosphate pyrophosphokinase family. Class I subfamily. As to quaternary structure, homohexamer. The cofactor is Mg(2+).

Its subcellular location is the cytoplasm. It catalyses the reaction D-ribose 5-phosphate + ATP = 5-phospho-alpha-D-ribose 1-diphosphate + AMP + H(+). The protein operates within metabolic intermediate biosynthesis; 5-phospho-alpha-D-ribose 1-diphosphate biosynthesis; 5-phospho-alpha-D-ribose 1-diphosphate from D-ribose 5-phosphate (route I): step 1/1. Functionally, involved in the biosynthesis of the central metabolite phospho-alpha-D-ribosyl-1-pyrophosphate (PRPP) via the transfer of pyrophosphoryl group from ATP to 1-hydroxyl of ribose-5-phosphate (Rib-5-P). This chain is Ribose-phosphate pyrophosphokinase, found in Ralstonia nicotianae (strain ATCC BAA-1114 / GMI1000) (Ralstonia solanacearum).